Reading from the N-terminus, the 308-residue chain is Phosphoribosylaminoimidazole-succinocarboxamide synthase (308 aa).

It belongs to the SAICAR synthetase family.

The enzyme catalyses 5-amino-1-(5-phospho-D-ribosyl)imidazole-4-carboxylate + L-aspartate + ATP = (2S)-2-[5-amino-1-(5-phospho-beta-D-ribosyl)imidazole-4-carboxamido]succinate + ADP + phosphate + 2 H(+). It functions in the pathway purine metabolism; IMP biosynthesis via de novo pathway; 5-amino-1-(5-phospho-D-ribosyl)imidazole-4-carboxamide from 5-amino-1-(5-phospho-D-ribosyl)imidazole-4-carboxylate: step 1/2. This is Phosphoribosylaminoimidazole-succinocarboxamide synthase from Xanthomonas euvesicatoria pv. vesicatoria (strain 85-10) (Xanthomonas campestris pv. vesicatoria).